The chain runs to 474 residues: tRNA-2-methylthio-N(6)-dimethylallyladenosine synthase (474 aa).

The region spanning 3 to 120 (KKLHIKTWGC…LPEMINHVQG (118 aa)) is the MTTase N-terminal domain. [4Fe-4S] cluster is bound by residues C12, C49, C83, C157, C161, and C164. In terms of domain architecture, Radical SAM core spans 143-375 (RAEGPTAFVS…QQRISQQAME (233 aa)). One can recognise a TRAM domain in the interval 378-441 (RKMVGTVQRV…ASSLRGILLR (64 aa)).

It belongs to the methylthiotransferase family. MiaB subfamily. As to quaternary structure, monomer. The cofactor is [4Fe-4S] cluster.

The protein localises to the cytoplasm. It carries out the reaction N(6)-dimethylallyladenosine(37) in tRNA + (sulfur carrier)-SH + AH2 + 2 S-adenosyl-L-methionine = 2-methylsulfanyl-N(6)-dimethylallyladenosine(37) in tRNA + (sulfur carrier)-H + 5'-deoxyadenosine + L-methionine + A + S-adenosyl-L-homocysteine + 2 H(+). Catalyzes the methylthiolation of N6-(dimethylallyl)adenosine (i(6)A), leading to the formation of 2-methylthio-N6-(dimethylallyl)adenosine (ms(2)i(6)A) at position 37 in tRNAs that read codons beginning with uridine. The protein is tRNA-2-methylthio-N(6)-dimethylallyladenosine synthase of Yersinia pestis bv. Antiqua (strain Angola).